The following is a 177-amino-acid chain: tRNA-splicing endonuclease (177 aa).

Active-site residues include Y114, H123, and K154.

It belongs to the tRNA-intron endonuclease family. Archaeal short subfamily. As to quaternary structure, homotetramer; although the tetramer contains four active sites, only two participate in the cleavage. Therefore, it should be considered as a dimer of dimers.

It catalyses the reaction pretRNA = a 3'-half-tRNA molecule with a 5'-OH end + a 5'-half-tRNA molecule with a 2',3'-cyclic phosphate end + an intron with a 2',3'-cyclic phosphate and a 5'-hydroxyl terminus.. Its function is as follows. Endonuclease that removes tRNA introns. Cleaves pre-tRNA at the 5'- and 3'-splice sites to release the intron. The products are an intron and two tRNA half-molecules bearing 2',3' cyclic phosphate and 5'-OH termini. Recognizes a pseudosymmetric substrate in which 2 bulged loops of 3 bases are separated by a stem of 4 bp. This Methanococcus vannielii (strain ATCC 35089 / DSM 1224 / JCM 13029 / OCM 148 / SB) protein is tRNA-splicing endonuclease.